A 376-amino-acid polypeptide reads, in one-letter code: DNA polymerase IV (376 aa).

A UmuC domain is found at 6-187 (IIHIDMDAFF…LSIGKFYGVG (182 aa)). 2 residues coordinate Mg(2+): aspartate 10 and aspartate 105. Residue glutamate 106 is part of the active site.

The protein belongs to the DNA polymerase type-Y family. In terms of assembly, monomer. Requires Mg(2+) as cofactor.

Its subcellular location is the cytoplasm. It carries out the reaction DNA(n) + a 2'-deoxyribonucleoside 5'-triphosphate = DNA(n+1) + diphosphate. Functionally, poorly processive, error-prone DNA polymerase involved in untargeted mutagenesis. Copies undamaged DNA at stalled replication forks, which arise in vivo from mismatched or misaligned primer ends. These misaligned primers can be extended by PolIV. Exhibits no 3'-5' exonuclease (proofreading) activity. May be involved in translesional synthesis, in conjunction with the beta clamp from PolIII. The polypeptide is DNA polymerase IV (Desulfotalea psychrophila (strain LSv54 / DSM 12343)).